Reading from the N-terminus, the 561-residue chain is 2-succinyl-5-enolpyruvyl-6-hydroxy-3-cyclohexene-1-carboxylate synthase (561 aa).

It belongs to the TPP enzyme family. MenD subfamily. As to quaternary structure, homodimer. Requires Mg(2+) as cofactor. Mn(2+) is required as a cofactor. Thiamine diphosphate serves as cofactor.

The enzyme catalyses isochorismate + 2-oxoglutarate + H(+) = 5-enolpyruvoyl-6-hydroxy-2-succinyl-cyclohex-3-ene-1-carboxylate + CO2. It functions in the pathway quinol/quinone metabolism; 1,4-dihydroxy-2-naphthoate biosynthesis; 1,4-dihydroxy-2-naphthoate from chorismate: step 2/7. The protein operates within quinol/quinone metabolism; menaquinone biosynthesis. Functionally, catalyzes the thiamine diphosphate-dependent decarboxylation of 2-oxoglutarate and the subsequent addition of the resulting succinic semialdehyde-thiamine pyrophosphate anion to isochorismate to yield 2-succinyl-5-enolpyruvyl-6-hydroxy-3-cyclohexene-1-carboxylate (SEPHCHC). This is 2-succinyl-5-enolpyruvyl-6-hydroxy-3-cyclohexene-1-carboxylate synthase from Proteus mirabilis (strain HI4320).